Reading from the N-terminus, the 300-residue chain is Protein TRACHEARY ELEMENT DIFFERENTIATION-RELATED 7A (300 aa).

The segment at M1–P181 is disordered. The Extracellular portion of the chain corresponds to M1–T187. Over residues H12–P181 the composition is skewed to pro residues. The N-linked (GlcNAc...) asparagine glycan is linked to N183. Residues I188–L208 traverse the membrane as a helical segment. The Cytoplasmic segment spans residues W209–G300.

As to expression, accumulates in cells differentiating into tracheary element (TE) which undergo secondary cell wall (SCW) formation.

Its subcellular location is the cell membrane. The protein resides in the secreted. The protein localises to the cell wall. Its function is as follows. Involved in the secondary cell wall (SCW) formation of vessel elements (e.g. protoxylem and metaxylem), thus promoting tracheary element (TE) differentiation. The sequence is that of Protein TRACHEARY ELEMENT DIFFERENTIATION-RELATED 7A from Zinnia elegans (Garden zinnia).